Reading from the N-terminus, the 67-residue chain is Small ribosomal subunit protein eS17 (67 aa).

It belongs to the eukaryotic ribosomal protein eS17 family. Part of the 30S ribosomal subunit.

The polypeptide is Small ribosomal subunit protein eS17 (Pyrococcus furiosus (strain ATCC 43587 / DSM 3638 / JCM 8422 / Vc1)).